Reading from the N-terminus, the 250-residue chain is Iron-sulfur assembly protein 1 (250 aa).

The interval 54–89 (AADSVSPDSQRPGKKPFKFIVSNQSKSSKASKSPKW) is disordered. The segment covering 75-89 (SNQSKSSKASKSPKW) has biased composition (low complexity). C178, C242, and C244 together coordinate Fe cation.

The protein belongs to the HesB/IscA family.

The protein resides in the mitochondrion matrix. Its function is as follows. Involved in the assembly of mitochondrial and cytoplasmic iron-sulfur proteins. Probably involved in the binding of an intermediate of Fe/S cluster assembly. This is Iron-sulfur assembly protein 1 (ISA1) from Saccharomyces cerevisiae (strain ATCC 204508 / S288c) (Baker's yeast).